The primary structure comprises 347 residues: Vitellogenin-3 (347 aa).

An N-terminal signal peptide occupies residues 1–15; that stretch reads MRGFILALVLALVGA. N-linked (GlcNAc...) asparagine glycosylation is present at N80. Over residues 104-118 the composition is skewed to low complexity; sequence PSATPLSSSSSTDSS. Disordered regions lie at residues 104–174 and 200–234; these read PSAT…DKHC and QDPRRKVQNSSISSSSSSSSDEGISTPVSQPMFLG. Basic and acidic residues predominate over residues 124–133; the sequence is PGNKRDKDEI. Positions 144–163 are enriched in low complexity; it reads SSSSSSSSSTGSGSSKTCSS. Positions 164 to 174 are enriched in basic and acidic residues; the sequence is SREDSSRDKHC. An N-linked (GlcNAc...) asparagine glycan is attached at N208. Residues 209-219 show a composition bias toward low complexity; that stretch reads SSISSSSSSSS.

In terms of processing, phosvitin, an egg yolk storage protein, is one of the most highly phosphorylated (10%) proteins in nature. Cathepsin D is responsible for intraoocytic processing of vitellogenin. Post-translationally, may contain intrachain disulfide bonds. In terms of tissue distribution, produced by the liver, secreted into the blood and then sequestered by receptor mediated endocytosis into growing oocytes, where it is generally cleaved, giving rise to the respective yolk components.

Precursor of the egg-yolk proteins that are sources of nutrients during early development of oviparous organisms. In terms of biological role, phosvitin is believed to be of importance in sequestering calcium, iron and other cations for the developing embryo. In Gallus gallus (Chicken), this protein is Vitellogenin-3 (VTG3).